Reading from the N-terminus, the 653-residue chain is DUF21 domain-containing protein At1g55930, chloroplastic (653 aa).

Residues 1-72 (MELDLSVLGR…DFSHRCQFVV (72 aa)) constitute a chloroplast transit peptide. Transmembrane regions (helical) follow at residues 103–123 (GIVLGAVVCGVLFYGCGKVLA), 157–177 (GLILAVLLGLSAFFSMAETSI), 208–228 (FLTTILIGTTVVNIAATALVT), 234–254 (IFGEAGVSAATGVMTVAILLL), and 280–300 (WLSLILYPVGRVVTYLSMGIL). A CNNM transmembrane domain is found at 149 to 335 (VLKVLREQGL…ELSGAIEEEE (187 aa)). 2 consecutive CBS domains span residues 354-415 (MTPL…LLES) and 421-479 (MAHK…IFDE).

The protein localises to the plastid. The protein resides in the chloroplast membrane. The sequence is that of DUF21 domain-containing protein At1g55930, chloroplastic (CBSDUFCH2) from Arabidopsis thaliana (Mouse-ear cress).